The primary structure comprises 595 residues: Inactive metallocarboxypeptidase ecm14 (595 aa).

An N-terminal signal peptide occupies residues 1-22; sequence MYRPDHVFVILCAVFFTGQVTA. Residues 23–178 constitute a propeptide that is removed on maturation; the sequence is VPAGTGITHP…MIYESQYPSR (156 aa). Residues 206 to 527 enclose the Peptidase M14 domain; that stretch reads NYQPFPVILQ…NSVLVLGHFL (322 aa). Residues H270 and E273 each coordinate Zn(2+). Substrate is bound by residues 270-273, R328, and 345-346; these read HARE and DR. A disulfide bridge connects residues C339 and C362. An N-linked (GlcNAc...) asparagine glycan is attached at N386. A Zn(2+)-binding site is contributed by H402. 403–404 contributes to the substrate binding site; that stretch reads SY.

The protein belongs to the peptidase M14 family. Zn(2+) is required as a cofactor.

The protein resides in the vacuole. The protein localises to the secreted. Inactive carboxypeptidase that may play a role in cell wall organization and biogenesis. The protein is Inactive metallocarboxypeptidase ecm14 (ecm14) of Talaromyces marneffei (strain ATCC 18224 / CBS 334.59 / QM 7333) (Penicillium marneffei).